The chain runs to 219 residues: LexA repressor (219 aa).

Residues 28-48 (RAEIAAELGFRSANAAEEHLQ) constitute a DNA-binding region (H-T-H motif). Active-site for autocatalytic cleavage activity residues include serine 138 and lysine 175.

It belongs to the peptidase S24 family. In terms of assembly, homodimer.

The enzyme catalyses Hydrolysis of Ala-|-Gly bond in repressor LexA.. Functionally, represses a number of genes involved in the response to DNA damage (SOS response), including recA and lexA. In the presence of single-stranded DNA, RecA interacts with LexA causing an autocatalytic cleavage which disrupts the DNA-binding part of LexA, leading to derepression of the SOS regulon and eventually DNA repair. The sequence is that of LexA repressor from Herminiimonas arsenicoxydans.